The sequence spans 29 residues: Cyclotide mobo-A (29 aa).

A cross-link (cyclopeptide (Gly-Asn)) is located at residues 1–29 (GFPTCGETCTLGTCNTPGCTCSWPICTRN). Cystine bridges form between Cys5–Cys19, Cys9–Cys21, and Cys14–Cys26.

This sequence belongs to the cyclotide family. Moebius subfamily. In terms of processing, this is a cyclic peptide.

Functionally, probably participates in a plant defense mechanism. This Melicytus obovatus (Hymenanthera obovata) protein is Cyclotide mobo-A.